Consider the following 209-residue polypeptide: Uracil phosphoribosyltransferase (209 aa).

5-phospho-alpha-D-ribose 1-diphosphate is bound by residues Arg79, Arg104, and 131 to 139 (DPMLATGNS). Residues Ile194 and 199 to 201 (GDA) each bind uracil. Asp200 is a binding site for 5-phospho-alpha-D-ribose 1-diphosphate.

The protein belongs to the UPRTase family. Mg(2+) is required as a cofactor.

It carries out the reaction UMP + diphosphate = 5-phospho-alpha-D-ribose 1-diphosphate + uracil. It functions in the pathway pyrimidine metabolism; UMP biosynthesis via salvage pathway; UMP from uracil: step 1/1. Its activity is regulated as follows. Allosterically activated by GTP. Its function is as follows. Catalyzes the conversion of uracil and 5-phospho-alpha-D-ribose 1-diphosphate (PRPP) to UMP and diphosphate. The sequence is that of Uracil phosphoribosyltransferase from Rhodococcus jostii (strain RHA1).